Consider the following 1216-residue polypeptide: MKLIPFLSEEEIQKLQEAEANSSKEQKKTAEQIEAIYTSGQNILVSASAGSGKTFVMAERILDQLARGVEISQLFISTFTVKAATELKERLEKKISKKIQETDDVDLKQHLGRQLADLPNAAIGTMDSFTQKFLGKHGYLLDIAPNFRILQNQSEQLLLENEVFHEVFEAHYQGKQKETFSHLLKNFAGRGKDERGLRQQVYKIYDFLQSTSNPQKWLSKSFLKGFEKADFTSEKEKLTEQIKQALWDLESFFRYHLDNDAKEFAKAAYLENVQLILDEIDSLNQESDSQAYQAVLARVVAISKEKNGRALTNASRKADLKPLADTYNEERKTQFAKLGQLSDQIAILDYQERYHGDTWKLAKTFQSFMSDFVEAYRQRKRQENAFEFADISHYTIEILENFPQVRESYQERFHEVMVDEYQDTNHIQERMLELLSNGHNRFMVGDIKQSIYRFRQADPQIFNEKFQRYAQNPQEGKLILLKENFRSSSEVLSATNDVFERLMDQEVGEINYDNKHQLVFANTKLTPNPDNKAEFLLYDKDDTGEEEESQTETKLTGEMRLVIKEILKLHQEKGVAFKEIALLTSSRNRNDQILLALSEYGIPVKTDGEQNNYLQSLEVQVMLDTLRVIHNPLQDYALVALMKSPMFGFDEDELARLSLQKAEDKAHENLYEKLVNAQKKASSQKGLIHTALAEKLKQFMDILASWRLYAKPHSLYDLIWKIYNDRFYYDYVGALPNGPARQANLYALALRADQFEKSNFKGLSRFIRMIDQVLEAQHDLASVAVAPPKDAVELMTIHKSKGLEFPYVFILNMDQDFNKQDSMSEVILSRQNGLGVKYIAKMETGAVEDHYPKTIKLSIPSLTYRQNEEELQLASYSEQMRLLYVAMTRAEKKLYLVGKGSREKLEAKQYPAAKNGKLNSNTRLQARNFQDWLWAISKVFTKDKLNFSYRFIGEDQLTREAIGELETKSPLRDSSQADNRQSDTIKEALEMLKEVEVYNTLHRAAIELPSVQTPSQIKKFYEPVMDMEGVEIAGQGQSVGKKISFDLPDFSTKEKVTGAEIGSATHELMQRIDLSQQLTLASLTETLKQVQTSQAVRDKINLDKILAFFDTVLGQEILANTDHLYREQPFSMLKRDQKSQEDFVVRGILDGYLLYENKIVLFDYKTDRYDEPSQLVDRYRGQLALYEEALSRAYSIKNIEKYLILLGKDEVQVVKV.

Residues 26–488 (QKKTAEQIEA…ILLKENFRSS (463 aa)) enclose the UvrD-like helicase ATP-binding domain. 47–54 (ASAGSGKT) lines the ATP pocket. The UvrD-like helicase C-terminal domain occupies 515–802 (KHQLVFANTK…ELMTIHKSKG (288 aa)).

It belongs to the helicase family. AddA subfamily. As to quaternary structure, heterodimer of AddA and AddB/RexB. Mg(2+) is required as a cofactor.

It catalyses the reaction Couples ATP hydrolysis with the unwinding of duplex DNA by translocating in the 3'-5' direction.. The enzyme catalyses ATP + H2O = ADP + phosphate + H(+). Its function is as follows. The heterodimer acts as both an ATP-dependent DNA helicase and an ATP-dependent, dual-direction single-stranded exonuclease. Recognizes the chi site generating a DNA molecule suitable for the initiation of homologous recombination. The AddA nuclease domain is required for chi fragment generation; this subunit has the helicase and 3' -&gt; 5' nuclease activities. This is ATP-dependent helicase/nuclease subunit A from Streptococcus pneumoniae (strain CGSP14).